Reading from the N-terminus, the 529-residue chain is Peptide chain release factor 3 (529 aa).

One can recognise a tr-type G domain in the interval 11–280 (SKRRTFAIIS…GLTEWAPAPK (270 aa)). Residues 20–27 (SHPDAGKT), 88–92 (DTPGH), and 142–145 (NKLD) contribute to the GTP site.

It belongs to the TRAFAC class translation factor GTPase superfamily. Classic translation factor GTPase family. PrfC subfamily.

It is found in the cytoplasm. Increases the formation of ribosomal termination complexes and stimulates activities of RF-1 and RF-2. It binds guanine nucleotides and has strong preference for UGA stop codons. It may interact directly with the ribosome. The stimulation of RF-1 and RF-2 is significantly reduced by GTP and GDP, but not by GMP. This Vibrio parahaemolyticus serotype O3:K6 (strain RIMD 2210633) protein is Peptide chain release factor 3.